The following is a 256-amino-acid chain: Flap endonuclease Xni (256 aa).

A Mg(2+)-binding site is contributed by Asp-105. Residues 163 to 256 (RSQLIDYLAL…QFRIKKPDSE (94 aa)) enclose the 5'-3' exonuclease domain. K(+) is bound by residues Leu-172, Ala-173, Pro-181, Val-183, and Ile-186. Positions 185–190 (GIGPKS) are interaction with DNA.

This sequence belongs to the Xni family. The cofactor is Mg(2+). K(+) serves as cofactor.

Has flap endonuclease activity. During DNA replication, flap endonucleases cleave the 5'-overhanging flap structure that is generated by displacement synthesis when DNA polymerase encounters the 5'-end of a downstream Okazaki fragment. This is Flap endonuclease Xni from Shewanella pealeana (strain ATCC 700345 / ANG-SQ1).